A 565-amino-acid polypeptide reads, in one-letter code: Periplasmic trehalase (565 aa).

A signal peptide spans 1–30; sequence MKSPAPSRPQKMALIPACIFLCFAALSVQA. Residues Arg-152, 159 to 160, Asn-196, 205 to 207, 277 to 279, and Gly-310 each bind substrate; these read WD, RSQ, and RPE. Catalysis depends on proton donor/acceptor residues Asp-312 and Glu-496. A substrate-binding site is contributed by Glu-511. The interval 539 to 565 is disordered; that stretch reads CDNVPATRPLSESTTQPVKPKEAEPTL.

It belongs to the glycosyl hydrolase 37 family. As to quaternary structure, monomer.

The protein resides in the periplasm. It carries out the reaction alpha,alpha-trehalose + H2O = alpha-D-glucose + beta-D-glucose. Provides the cells with the ability to utilize trehalose at high osmolarity by splitting it into glucose molecules that can subsequently be taken up by the phosphotransferase-mediated uptake system. This is Periplasmic trehalase from Shigella dysenteriae serotype 1 (strain Sd197).